The chain runs to 312 residues: Aspartate carbamoyltransferase catalytic subunit (312 aa).

Arg55 and Thr56 together coordinate carbamoyl phosphate. Lys83 is a binding site for L-aspartate. The carbamoyl phosphate site is built by Arg105, His138, and Gln141. The L-aspartate site is built by Arg171 and Arg225. Residues Gly266 and Pro267 each contribute to the carbamoyl phosphate site.

Belongs to the aspartate/ornithine carbamoyltransferase superfamily. ATCase family. Heterododecamer (2C3:3R2) of six catalytic PyrB chains organized as two trimers (C3), and six regulatory PyrI chains organized as three dimers (R2).

It catalyses the reaction carbamoyl phosphate + L-aspartate = N-carbamoyl-L-aspartate + phosphate + H(+). It participates in pyrimidine metabolism; UMP biosynthesis via de novo pathway; (S)-dihydroorotate from bicarbonate: step 2/3. Its function is as follows. Catalyzes the condensation of carbamoyl phosphate and aspartate to form carbamoyl aspartate and inorganic phosphate, the committed step in the de novo pyrimidine nucleotide biosynthesis pathway. In Corynebacterium glutamicum (strain R), this protein is Aspartate carbamoyltransferase catalytic subunit.